The chain runs to 246 residues: NAD-dependent protein deacetylase (246 aa).

Residues 1 to 246 (MKKPDIQQLK…VIEEIVNSNS (246 aa)) form the Deacetylase sirtuin-type domain. Residues alanine 25, phenylalanine 36, arginine 37, glutamine 106, isoleucine 108, aspartate 109, and histidine 124 each coordinate NAD(+). Position 36 (phenylalanine 36) interacts with nicotinamide. Residues isoleucine 108 and aspartate 109 each coordinate nicotinamide. Histidine 124 acts as the Proton acceptor in catalysis. Zn(2+) contacts are provided by cysteine 132, cysteine 135, cysteine 152, and cysteine 155. The NAD(+) site is built by serine 193, serine 194, asparagine 216, and aspartate 233.

It belongs to the sirtuin family. Class U subfamily. Zn(2+) is required as a cofactor.

Its subcellular location is the cytoplasm. It carries out the reaction N(6)-acetyl-L-lysyl-[protein] + NAD(+) + H2O = 2''-O-acetyl-ADP-D-ribose + nicotinamide + L-lysyl-[protein]. Functionally, NAD-dependent protein deacetylase which modulates the activities of several enzymes which are inactive in their acetylated form. The sequence is that of NAD-dependent protein deacetylase from Staphylococcus epidermidis (strain ATCC 35984 / DSM 28319 / BCRC 17069 / CCUG 31568 / BM 3577 / RP62A).